Consider the following 326-residue polypeptide: Mitochondrial glycine transporter (326 aa).

Solcar repeat units follow at residues 45 to 134 (HPVI…SKQY), 141 to 225 (PTAL…TRTA), and 237 to 321 (LIPL…MMAR). The next 6 helical transmembrane spans lie at 51-76 (FLCG…TRLQ), 109-135 (GMSP…KQYF), 147-172 (VILG…TRYE), 200-223 (GLTA…SQTR), 241-267 (INFS…KTHM), and 296-314 (GSVP…AWTV).

It belongs to the mitochondrial carrier (TC 2.A.29) family. SLC25A38 subfamily.

The protein resides in the mitochondrion inner membrane. The enzyme catalyses glycine(in) = glycine(out). Its function is as follows. Mitochondrial glycine transporter that imports glycine into the mitochondrial matrix. Plays an important role in providing glycine for the first enzymatic step in heme biosynthesis, the condensation of glycine with succinyl-CoA to produce 5-aminolevulinate (ALA) in the mitochondrial matrix. Required during erythropoiesis. In terms of biological role, plays a role as pro-apoptotic protein that induces caspase-dependent apoptosis. The protein is Mitochondrial glycine transporter of Mus musculus (Mouse).